Consider the following 117-residue polypeptide: Small ribosomal subunit protein uS17 (117 aa).

It belongs to the universal ribosomal protein uS17 family. Part of the 30S ribosomal subunit.

In terms of biological role, one of the primary rRNA binding proteins, it binds specifically to the 5'-end of 16S ribosomal RNA. The protein is Small ribosomal subunit protein uS17 of Methanocaldococcus jannaschii (strain ATCC 43067 / DSM 2661 / JAL-1 / JCM 10045 / NBRC 100440) (Methanococcus jannaschii).